Here is a 146-residue protein sequence, read N- to C-terminus: ATP synthase epsilon chain (146 aa).

The segment at 102–122 is disordered; that stretch reads QSAKKRAEQHMQEAKEKHNER.

Belongs to the ATPase epsilon chain family. F-type ATPases have 2 components, CF(1) - the catalytic core - and CF(0) - the membrane proton channel. CF(1) has five subunits: alpha(3), beta(3), gamma(1), delta(1), epsilon(1). CF(0) has three main subunits: a, b and c.

It localises to the cell membrane. Its function is as follows. Produces ATP from ADP in the presence of a proton gradient across the membrane. This is ATP synthase epsilon chain from Lactobacillus gasseri (strain ATCC 33323 / DSM 20243 / BCRC 14619 / CIP 102991 / JCM 1131 / KCTC 3163 / NCIMB 11718 / NCTC 13722 / AM63).